We begin with the raw amino-acid sequence, 536 residues long: MRETGIHNTAASIATSGLKEISAVFYNLGAARLYEETVRRGEAELSAQGALVARTGQHTGRSPKDKFVVRDADTEDHVWWDNNKPMSREAFELLYADFIDHAKGKELFVQDLIGGADADNKINARVITEYAWHSLFIRNLLIRPEQEALASYVPEMTIIDLPTFKADPERYGVRTETVIAVDLTRKIVLIGGTSYAGEMKKSVFTALNYILPAKGVMPMHCSANEGPNGDTAVFFGLSGTGKTTLSADPTRTLIGDDEHGWGEHGIFNFEGGCYAKTIRLSAEAEPEIYATTQRFGTVLENVVLDENRQPDFDDGSLTENTRCAYPLDFIPNASKSGKGGQPKNIIMLTADAFGVMPPIAKLTPAQAMYHFLSGYTAKVAGTEKGVTEPEATFSTCFGAPFMPRHPSEYGNLLRKLIAEHKVDCWLVNTGWTGGAYGVGKRMPIKATRALLAAALDGSLNDAEFRIDPNFGFAVPVDVPGVDTSILDPRSTWADKAAYDAQAKKLVDMFVTNFEKFESHVDHEVKDAAPAIRIAAE.

Substrate contacts are provided by Arg-61, Tyr-195, and Lys-201. Residues Lys-201, His-220, and 236-244 (GLSGTGKTT) contribute to the ATP site. Mn(2+) is bound by residues Lys-201 and His-220. Residue Asp-257 participates in Mn(2+) binding. The ATP site is built by Glu-285, Arg-322, and Thr-447. Arg-322 is a substrate binding site.

The protein belongs to the phosphoenolpyruvate carboxykinase (ATP) family. Requires Mn(2+) as cofactor.

It localises to the cytoplasm. It catalyses the reaction oxaloacetate + ATP = phosphoenolpyruvate + ADP + CO2. Its pathway is carbohydrate biosynthesis; gluconeogenesis. Involved in the gluconeogenesis. Catalyzes the conversion of oxaloacetate (OAA) to phosphoenolpyruvate (PEP) through direct phosphoryl transfer between the nucleoside triphosphate and OAA. The sequence is that of Phosphoenolpyruvate carboxykinase (ATP) from Brucella anthropi (strain ATCC 49188 / DSM 6882 / CCUG 24695 / JCM 21032 / LMG 3331 / NBRC 15819 / NCTC 12168 / Alc 37) (Ochrobactrum anthropi).